Consider the following 1223-residue polypeptide: ATP-dependent DNA helicase P143 (1223 aa).

The Nuclear localization signal motif lies at 692-701 (RKCRCVQKIK). 919 to 926 (GVPLSGKS) lines the ATP pocket. A DNA-binding region (H-T-H motif) is located at residues 967–981 (TINELKKCSESFFKK).

Its subcellular location is the host nucleus. It catalyses the reaction ATP + H2O = ADP + phosphate + H(+). Its function is as follows. Essential for the initiation of viral DNA replication, it may contribute to other functions such as controlling the switch to the late phase and leading to the inhibition of host protein synthesis. Required for late and very late gene expression. This chain is ATP-dependent DNA helicase P143 (P143), found in Orgyia pseudotsugata multicapsid polyhedrosis virus (OpMNPV).